Here is a 204-residue protein sequence, read N- to C-terminus: Transcription factor bHLH120 (204 aa).

Disordered regions lie at residues 1-27 (MNPS…KKEK) and 93-116 (KREI…RSEP). Residues 26–78 (EKKLLHRNIERQRRQEMAILFASLRSQLPLKYIKGKRAMSDHVNGAVSFIKDT) enclose the bHLH domain.

In terms of assembly, homodimer.

The protein localises to the nucleus. The chain is Transcription factor bHLH120 (BHLH120) from Arabidopsis thaliana (Mouse-ear cress).